A 243-amino-acid chain; its full sequence is Small ribosomal subunit protein eS4 (243 aa).

Residues 37–99 (IPLALLLKHY…SDLYFRIVPD (63 aa)) form the S4 RNA-binding domain.

This sequence belongs to the eukaryotic ribosomal protein eS4 family.

This chain is Small ribosomal subunit protein eS4 (rps4e), found in Sulfurisphaera tokodaii (strain DSM 16993 / JCM 10545 / NBRC 100140 / 7) (Sulfolobus tokodaii).